Here is a 462-residue protein sequence, read N- to C-terminus: Bifunctional enzyme LpxC/FabZ (462 aa).

A UDP-3-O-acyl-N-acetylglucosamine deacetylase region spans residues 1 to 302; that stretch reads MQKQQTLKDK…MARLIRKEIK (302 aa). Zn(2+) is bound by residues histidine 78, histidine 260, and aspartate 264. The Proton donor role is filled by histidine 287. Positions 303-462 are 3-hydroxyacyl-[acyl-carrier-protein] dehydratase; that stretch reads QNEAQAPVYN…FMAQIIQNKE (160 aa). Residue histidine 364 is part of the active site.

The protein in the N-terminal section; belongs to the LpxC family. In the C-terminal section; belongs to the thioester dehydratase family. Zn(2+) serves as cofactor.

The protein resides in the cytoplasm. It catalyses the reaction a UDP-3-O-[(3R)-3-hydroxyacyl]-N-acetyl-alpha-D-glucosamine + H2O = a UDP-3-O-[(3R)-3-hydroxyacyl]-alpha-D-glucosamine + acetate. It carries out the reaction a (3R)-hydroxyacyl-[ACP] = a (2E)-enoyl-[ACP] + H2O. It participates in glycolipid biosynthesis; lipid IV(A) biosynthesis; lipid IV(A) from (3R)-3-hydroxytetradecanoyl-[acyl-carrier-protein] and UDP-N-acetyl-alpha-D-glucosamine: step 2/6. Functionally, catalyzes the hydrolysis of UDP-3-O-myristoyl-N-acetylglucosamine to form UDP-3-O-myristoylglucosamine and acetate, the committed step in lipid A biosynthesis. Its function is as follows. Involved in unsaturated fatty acids biosynthesis. Catalyzes the dehydration of short chain beta-hydroxyacyl-ACPs and long chain saturated and unsaturated beta-hydroxyacyl-ACPs. The polypeptide is Bifunctional enzyme LpxC/FabZ (lpxC/fabZ) (Porphyromonas gingivalis (strain ATCC BAA-308 / W83)).